A 308-amino-acid polypeptide reads, in one-letter code: 4-hydroxy-3-methylbut-2-enyl diphosphate reductase (308 aa).

Cysteine 13 is a [4Fe-4S] cluster binding site. 2 residues coordinate (2E)-4-hydroxy-3-methylbut-2-enyl diphosphate: histidine 42 and histidine 75. Dimethylallyl diphosphate contacts are provided by histidine 42 and histidine 75. Residues histidine 42 and histidine 75 each contribute to the isopentenyl diphosphate site. A [4Fe-4S] cluster-binding site is contributed by cysteine 97. (2E)-4-hydroxy-3-methylbut-2-enyl diphosphate is bound at residue histidine 125. Residue histidine 125 coordinates dimethylallyl diphosphate. Histidine 125 contributes to the isopentenyl diphosphate binding site. Glutamate 127 (proton donor) is an active-site residue. Residue threonine 165 participates in (2E)-4-hydroxy-3-methylbut-2-enyl diphosphate binding. Cysteine 195 is a binding site for [4Fe-4S] cluster. Residues serine 223, serine 224, asparagine 225, and serine 267 each coordinate (2E)-4-hydroxy-3-methylbut-2-enyl diphosphate. Dimethylallyl diphosphate is bound by residues serine 223, serine 224, asparagine 225, and serine 267. Positions 223, 224, 225, and 267 each coordinate isopentenyl diphosphate.

This sequence belongs to the IspH family. [4Fe-4S] cluster serves as cofactor.

It catalyses the reaction isopentenyl diphosphate + 2 oxidized [2Fe-2S]-[ferredoxin] + H2O = (2E)-4-hydroxy-3-methylbut-2-enyl diphosphate + 2 reduced [2Fe-2S]-[ferredoxin] + 2 H(+). The catalysed reaction is dimethylallyl diphosphate + 2 oxidized [2Fe-2S]-[ferredoxin] + H2O = (2E)-4-hydroxy-3-methylbut-2-enyl diphosphate + 2 reduced [2Fe-2S]-[ferredoxin] + 2 H(+). Its pathway is isoprenoid biosynthesis; dimethylallyl diphosphate biosynthesis; dimethylallyl diphosphate from (2E)-4-hydroxy-3-methylbutenyl diphosphate: step 1/1. The protein operates within isoprenoid biosynthesis; isopentenyl diphosphate biosynthesis via DXP pathway; isopentenyl diphosphate from 1-deoxy-D-xylulose 5-phosphate: step 6/6. Functionally, catalyzes the conversion of 1-hydroxy-2-methyl-2-(E)-butenyl 4-diphosphate (HMBPP) into a mixture of isopentenyl diphosphate (IPP) and dimethylallyl diphosphate (DMAPP). Acts in the terminal step of the DOXP/MEP pathway for isoprenoid precursor biosynthesis. The chain is 4-hydroxy-3-methylbut-2-enyl diphosphate reductase from Chlamydia muridarum (strain MoPn / Nigg).